The chain runs to 102 residues: uncharacterized protein (102 aa).

The chain crosses the membrane as a helical span at residues 5 to 27; it reads IYRSNLVIVITLFVSLSYYHTCF.

The protein localises to the host membrane. This is an uncharacterized protein from Microplitis demolitor (Parasitoid wasp).